The following is a 426-amino-acid chain: S-adenosylmethionine synthase (426 aa).

ATP is bound at residue histidine 22. Aspartate 24 lines the Mg(2+) pocket. Position 50 (glutamate 50) interacts with K(+). Positions 63 and 106 each coordinate L-methionine. Positions 106-116 (QSPDISQGVTA) are flexible loop. ATP is bound by residues 181 to 183 (DGK), 257 to 258 (KF), aspartate 266, 272 to 273 (RK), alanine 289, and lysine 293. Aspartate 266 is an L-methionine binding site. Lysine 297 contributes to the L-methionine binding site.

Belongs to the AdoMet synthase family. Homotetramer; dimer of dimers. The cofactor is Mg(2+). K(+) is required as a cofactor.

It localises to the cytoplasm. It carries out the reaction L-methionine + ATP + H2O = S-adenosyl-L-methionine + phosphate + diphosphate. It functions in the pathway amino-acid biosynthesis; S-adenosyl-L-methionine biosynthesis; S-adenosyl-L-methionine from L-methionine: step 1/1. In terms of biological role, catalyzes the formation of S-adenosylmethionine (AdoMet) from methionine and ATP. The overall synthetic reaction is composed of two sequential steps, AdoMet formation and the subsequent tripolyphosphate hydrolysis which occurs prior to release of AdoMet from the enzyme. The sequence is that of S-adenosylmethionine synthase from Synechocystis sp. (strain ATCC 27184 / PCC 6803 / Kazusa).